Consider the following 319-residue polypeptide: Ribonucleoside-diphosphate reductase small chain (319 aa).

Fe cation-binding residues include aspartate 70, glutamate 101, and histidine 104. Tyrosine 108 is a catalytic residue. The Fe cation site is built by glutamate 163, glutamate 197, and histidine 200. The interaction with R1 stretch occupies residues 313–319; the sequence is FSLDVDF.

The protein belongs to the ribonucleoside diphosphate reductase small chain family. As to quaternary structure, interacts with RNR1/OPG080 subunit. Can interact with host RNR1 supunit. Fe cation is required as a cofactor.

It carries out the reaction a 2'-deoxyribonucleoside 5'-diphosphate + [thioredoxin]-disulfide + H2O = a ribonucleoside 5'-diphosphate + [thioredoxin]-dithiol. Functionally, ribonucleoside-diphosphate reductase holoenzyme provides the precursors necessary for viral DNA synthesis. Allows virus growth in non-dividing cells. Catalyzes the biosynthesis of deoxyribonucleotides from the corresponding ribonucleotides. The protein is Ribonucleoside-diphosphate reductase small chain (OPG048) of Homo sapiens (Human).